The following is an 86-amino-acid chain: Large ribosomal subunit protein bL31B (86 aa).

The protein belongs to the bacterial ribosomal protein bL31 family. Type B subfamily. Part of the 50S ribosomal subunit.

This Salmonella paratyphi A (strain ATCC 9150 / SARB42) protein is Large ribosomal subunit protein bL31B.